An 872-amino-acid chain; its full sequence is Alanine--tRNA ligase (872 aa).

Zn(2+) contacts are provided by histidine 567, histidine 571, cysteine 669, and histidine 673.

It belongs to the class-II aminoacyl-tRNA synthetase family. It depends on Zn(2+) as a cofactor.

Its subcellular location is the cytoplasm. The enzyme catalyses tRNA(Ala) + L-alanine + ATP = L-alanyl-tRNA(Ala) + AMP + diphosphate. In terms of biological role, catalyzes the attachment of alanine to tRNA(Ala) in a two-step reaction: alanine is first activated by ATP to form Ala-AMP and then transferred to the acceptor end of tRNA(Ala). Also edits incorrectly charged Ser-tRNA(Ala) and Gly-tRNA(Ala) via its editing domain. In Streptococcus pyogenes serotype M2 (strain MGAS10270), this protein is Alanine--tRNA ligase.